Here is a 529-residue protein sequence, read N- to C-terminus: Peptide chain release factor 3 (529 aa).

Residues 11–280 enclose the tr-type G domain; it reads AKRRTFAIIS…GLVEWAPAPM (270 aa). Residues 20–27, 88–92, and 142–145 contribute to the GTP site; these read SHPDAGKT, DTPGH, and NKLD.

This sequence belongs to the TRAFAC class translation factor GTPase superfamily. Classic translation factor GTPase family. PrfC subfamily.

Its subcellular location is the cytoplasm. Functionally, increases the formation of ribosomal termination complexes and stimulates activities of RF-1 and RF-2. It binds guanine nucleotides and has strong preference for UGA stop codons. It may interact directly with the ribosome. The stimulation of RF-1 and RF-2 is significantly reduced by GTP and GDP, but not by GMP. The sequence is that of Peptide chain release factor 3 from Yersinia pseudotuberculosis serotype O:1b (strain IP 31758).